A 577-amino-acid polypeptide reads, in one-letter code: Phosphatidylinositol/phosphatidylcholine transfer protein SFH14 (577 aa).

The interval 1 to 22 (MSGREQTGEKLSDSEYIEEEPR) is disordered. The 176-residue stretch at 136–311 (ELDEVTRHYP…FLGGLCKCPN (176 aa)) folds into the CRAL-TRIO domain. The segment at 364–383 (ETLKEEPEPEEYYSSTGSRS) is disordered. Positions 523 to 550 (EANEKLLAESLERIKSLELDLDKTKSVL) form a coiled coil.

This sequence belongs to the SFH family.

The protein resides in the golgi apparatus membrane. Its subcellular location is the cell membrane. Required for transport of secretory proteins from the Golgi complex. Catalyzes the transfer of phosphatidylinositol and phosphatidylcholine between membranes in vitro. In Arabidopsis thaliana (Mouse-ear cress), this protein is Phosphatidylinositol/phosphatidylcholine transfer protein SFH14 (SFH14).